We begin with the raw amino-acid sequence, 128 residues long: Fatty acid binding protein 1-B.1 (128 aa).

It belongs to the calycin superfamily. Fatty-acid binding protein (FABP) family. As to expression, expressed in the yolk syncytial layer (YSL) and subsequently in the intestinal bulb in developing embryos and larvae. In adults, expressed in the intestine.

It localises to the cytoplasm. Its function is as follows. Binds free fatty acids and their coenzyme A derivatives, bilirubin, and some other small molecules in the cytoplasm. May be involved in intracellular lipid transport. The chain is Fatty acid binding protein 1-B.1 (fabp1b.1) from Danio rerio (Zebrafish).